The following is a 321-amino-acid chain: GTP 3',8-cyclase (321 aa).

Positions 5-233 constitute a Radical SAM core domain; that stretch reads SFNRVIDYIR…QGSSKIYTLE (229 aa). Position 14 (R14) interacts with GTP. Positions 21 and 25 each coordinate [4Fe-4S] cluster. S-adenosyl-L-methionine is bound at residue Y27. C28 is a binding site for [4Fe-4S] cluster. GTP is bound at residue R64. G68 contributes to the S-adenosyl-L-methionine binding site. S95 is a binding site for GTP. S119 is an S-adenosyl-L-methionine binding site. A GTP-binding site is contributed by K155. Residue M189 participates in S-adenosyl-L-methionine binding. Residues C249 and C252 each coordinate [4Fe-4S] cluster. GTP is bound at residue 254–256; sequence RIR. C266 serves as a coordination point for [4Fe-4S] cluster.

This sequence belongs to the radical SAM superfamily. MoaA family. As to quaternary structure, monomer and homodimer. The cofactor is [4Fe-4S] cluster.

The enzyme catalyses GTP + AH2 + S-adenosyl-L-methionine = (8S)-3',8-cyclo-7,8-dihydroguanosine 5'-triphosphate + 5'-deoxyadenosine + L-methionine + A + H(+). Its pathway is cofactor biosynthesis; molybdopterin biosynthesis. Its function is as follows. Catalyzes the cyclization of GTP to (8S)-3',8-cyclo-7,8-dihydroguanosine 5'-triphosphate. The sequence is that of GTP 3',8-cyclase from Helicobacter pylori (strain ATCC 700392 / 26695) (Campylobacter pylori).